Reading from the N-terminus, the 1263-residue chain is TBC1 domain family member 9B (1263 aa).

GRAM domains lie at 142–209 (LKMR…EKNA) and 288–356 (ECYR…EKAD). Thr397 is subject to Phosphothreonine. The interval 397–449 (TPSKQTGSSIGGTKASVSDPAPESLPTPQEASEPPASPSSPLSSPPSFSTQEI) is disordered. Residues Ser412, Ser433, Ser436, and Ser464 each carry the phosphoserine modification. Over residues 422–447 (PTPQEASEPPASPSSPLSSPPSFSTQ) the composition is skewed to low complexity. The Rab-GAP TBC domain occupies 509 to 696 (GIPESLRGEL…VIVDCFFYEG (188 aa)). A helical transmembrane segment spans residues 669-689 (LSWFLTLFLSVMPFESAVVIV). An EF-hand domain is found at 880–915 (HTPVLAGRMFRLLDQNKDSLINFKEFVTGMSGMYHG). 3 disordered regions span residues 977–1002 (EQQEGSGNEDTPERREEKGTSPPDYR), 1075–1126 (TTKK…SGDM), and 1139–1159 (VEGGSGEGQGSPSLLLSDDET). The segment covering 987-1002 (TPERREEKGTSPPDYR) has biased composition (basic and acidic residues). Ser1254 is modified (phosphoserine).

It is found in the membrane. May act as a GTPase-activating protein for Rab family protein(s). This chain is TBC1 domain family member 9B (Tbc1d9b), found in Mus musculus (Mouse).